The following is a 288-amino-acid chain: 2-dehydro-3-deoxyphosphooctonate aldolase (288 aa).

This sequence belongs to the KdsA family.

It is found in the cytoplasm. The catalysed reaction is D-arabinose 5-phosphate + phosphoenolpyruvate + H2O = 3-deoxy-alpha-D-manno-2-octulosonate-8-phosphate + phosphate. Its pathway is carbohydrate biosynthesis; 3-deoxy-D-manno-octulosonate biosynthesis; 3-deoxy-D-manno-octulosonate from D-ribulose 5-phosphate: step 2/3. It participates in bacterial outer membrane biogenesis; lipopolysaccharide biosynthesis. The protein is 2-dehydro-3-deoxyphosphooctonate aldolase of Syntrophobacter fumaroxidans (strain DSM 10017 / MPOB).